Reading from the N-terminus, the 269-residue chain is Chromophore lyase CRL, chloroplastic (269 aa).

The helical transmembrane segment at 19–36 threads the bilayer; it reads ARGLVVKTLVLIGGALLI.

This sequence belongs to the CpcT/CpeT biliprotein lyase family. In terms of tissue distribution, mostly expressed in shoot apices, to a lower extent, in leaves, inflorescence stems, buds and cotyledons, and, at low levels, in roots and siliques.

It localises to the plastid. Its subcellular location is the chloroplast outer membrane. In terms of biological role, covalently attaches a chromophore to Cys residue(s) of phycobiliproteins. Required for plastid division, and involved in cell differentiation and regulation of the cell division plane. Maintenance of plastid homeostasis controls plant preconditioning to stress and stress acclimation. Functionally, confers sensitivity to cabbage leaf curl virus (CaLCuV), probably by supporting viral movement. The protein is Chromophore lyase CRL, chloroplastic (CRL) of Arabidopsis thaliana (Mouse-ear cress).